A 321-amino-acid polypeptide reads, in one-letter code: Tetraketide alpha-pyrone reductase 2 (321 aa).

S2 carries the N-acetylserine modification. NADP(+) contacts are provided by residues Y4–V28, K40, and Y160.

It belongs to the NAD(P)-dependent epimerase/dehydratase family. Dihydroflavonol-4-reductase subfamily.

It is found in the cytoplasm. Functionally, may be involved in the biosynthesis of hydroxylated tetraketide compounds that serve as sporopollenin precursors (the main constituents of exine). Acts on tetraketide alpha-pyrones and reduces the carbonyl function on the tetraketide alkyl chain to a secondary alcohol function. The chain is Tetraketide alpha-pyrone reductase 2 (TKPR2) from Arabidopsis thaliana (Mouse-ear cress).